We begin with the raw amino-acid sequence, 108 residues long: UPF0060 membrane protein Mvan_3406 (108 aa).

The next 4 membrane-spanning stretches (helical) occupy residues 7-27 (LLFV…WQGV), 32-52 (GLTW…VAAF), 61-81 (VLAA…VVAD), and 87-107 (RWDI…MYAP).

The protein belongs to the UPF0060 family.

It is found in the cell membrane. This Mycolicibacterium vanbaalenii (strain DSM 7251 / JCM 13017 / BCRC 16820 / KCTC 9966 / NRRL B-24157 / PYR-1) (Mycobacterium vanbaalenii) protein is UPF0060 membrane protein Mvan_3406.